The following is a 643-amino-acid chain: Threonine--tRNA ligase (643 aa).

In terms of domain architecture, TGS spans 1–61 (MIKITLKDGS…NEDSSLEICT (61 aa)). The segment at 240 to 540 (DHNKLGRELG…LIEKYAGALP (301 aa)) is catalytic. Positions 335, 386, and 517 each coordinate Zn(2+).

Belongs to the class-II aminoacyl-tRNA synthetase family. As to quaternary structure, homodimer. It depends on Zn(2+) as a cofactor.

The protein resides in the cytoplasm. It carries out the reaction tRNA(Thr) + L-threonine + ATP = L-threonyl-tRNA(Thr) + AMP + diphosphate + H(+). In terms of biological role, catalyzes the attachment of threonine to tRNA(Thr) in a two-step reaction: L-threonine is first activated by ATP to form Thr-AMP and then transferred to the acceptor end of tRNA(Thr). Also edits incorrectly charged L-seryl-tRNA(Thr). The protein is Threonine--tRNA ligase of Clostridium perfringens (strain SM101 / Type A).